The following is a 578-amino-acid chain: MELENIVANSLLLKARQGGYGKKSGRSKKWKEILTLPPVSQCSELRHSIEKDYSSLCDKQPIGRRLFRQFCDTKPTLKRHIEFLDAVAEYEVADDEDRSDCGLSILDRFFNDKLAAPLPEIPPDVVTECRLGLKEENPSKKAFEECTRVAHNYLRGEPFEEYQESSYFSQFLQWKWLERQPVTKNTFRHYRVLGKGGFGEVCACQVRATGKMYACKKLQKKRIKKRKGEAMALNEKRILEKVQSRFVVSLAYAYETKDALCLVLTIMNGGDLKFHIYNLGNPGFDEQRAVFYAAELCCGLEDLQRERIVYRDLKPENILLDDRGHIRISDLGLATEIPEGQRVRGRVGTVGYMAPEVVNNEKYTFSPDWWGLGCLIYEMIQGHSPFKKYKEKVKWEEVDQRIKNDTEEYSEKFSEDAKSICRMLLTKNPSKRLGCRGEGAAGVKQHPVFKDINFRRLEANMLEPPFCPDPHAVYCKDVLDIEQFSVVKGIYLDTADEDFYARFATGCVSIPWQNEMIESGCFKDINKSESEEALPLDLDKNIHTPVSRPNRGFFYRLFRRGGCLTMVPSEKEVEPKQC.

Met1 bears the N-acetylmethionine mark. The interval 1 to 154 (MELENIVANS…ECTRVAHNYL (154 aa)) is N-terminal. Positions 52 to 172 (DYSSLCDKQP…QESSYFSQFL (121 aa)) constitute an RGS domain. The Protein kinase domain maps to 187–449 (FRHYRVLGKG…AAGVKQHPVF (263 aa)). ATP contacts are provided by residues 193 to 201 (LGKGGFGEV) and Lys216. Asp312 acts as the Proton acceptor in catalysis. The 66-residue stretch at 450-515 (KDINFRRLEA…GCVSIPWQNE (66 aa)) folds into the AGC-kinase C-terminal domain. At Ser485 the chain carries Phosphoserine.

Belongs to the protein kinase superfamily. AGC Ser/Thr protein kinase family. GPRK subfamily. In terms of assembly, interacts with DRD3. In terms of processing, palmitoylated. As to expression, isoform 1, isoform 2, isoform 3, and isoform 4 are expressed in testis. Isoform 4 is expressed in myometrium.

Its subcellular location is the cytoplasm. It is found in the cell cortex. The catalysed reaction is [G-protein-coupled receptor] + ATP = [G-protein-coupled receptor]-phosphate + ADP + H(+). Inhibited by heparin. In terms of biological role, specifically phosphorylates the activated forms of G protein-coupled receptors. GRK4-alpha can phosphorylate rhodopsin and its activity is inhibited by calmodulin; the other three isoforms do not phosphorylate rhodopsin and do not interact with calmodulin. GRK4-alpha and GRK4-gamma phosphorylate DRD3. Phosphorylates ADRB2. This is G protein-coupled receptor kinase 4 (GRK4) from Homo sapiens (Human).